The sequence spans 188 residues: Ribosome-recycling factor (188 aa).

The protein belongs to the RRF family.

The protein localises to the cytoplasm. Functionally, responsible for the release of ribosomes from messenger RNA at the termination of protein biosynthesis. May increase the efficiency of translation by recycling ribosomes from one round of translation to another. In Dinoroseobacter shibae (strain DSM 16493 / NCIMB 14021 / DFL 12), this protein is Ribosome-recycling factor.